A 141-amino-acid polypeptide reads, in one-letter code: Small ribosomal subunit protein uS12 (141 aa).

A compositionally biased stretch (polar residues) spans 1-11 (MPTISQLVTTS). The interval 1-22 (MPTISQLVTTSRQDKNYKSKSP) is disordered. Asp102 carries the 3-methylthioaspartic acid modification.

It belongs to the universal ribosomal protein uS12 family. In terms of assembly, part of the 30S ribosomal subunit. Contacts proteins S8 and S17. May interact with IF1 in the 30S initiation complex.

In terms of biological role, with S4 and S5 plays an important role in translational accuracy. Interacts with and stabilizes bases of the 16S rRNA that are involved in tRNA selection in the A site and with the mRNA backbone. Located at the interface of the 30S and 50S subunits, it traverses the body of the 30S subunit contacting proteins on the other side and probably holding the rRNA structure together. The combined cluster of proteins S8, S12 and S17 appears to hold together the shoulder and platform of the 30S subunit. In Acholeplasma laidlawii (strain PG-8A), this protein is Small ribosomal subunit protein uS12.